The following is a 482-amino-acid chain: Butyrophilin-like protein 2 (482 aa).

At 1-6 (MVDFPG) the chain is on the cytoplasmic side. Residues 7–23 (YNLSGAVASFLFILLTM) form a helical; Signal-anchor for type II membrane protein membrane-spanning segment. The Extracellular portion of the chain corresponds to 24–482 (KQSEDFRVIG…VAVGLPRKRS (459 aa)). Ig-like V-type domains are found at residues 29-140 (FRVI…LLLK), 142-234 (AGLG…SVIS), and 236-355 (PEKL…ASLD). Cystine bridges form between Cys50–Cys124, Cys164–Cys218, and Cys267–Cys341. Asn210 carries N-linked (GlcNAc...) asparagine glycosylation. Asn427 carries N-linked (GlcNAc...) asparagine glycosylation.

Belongs to the immunoglobulin superfamily. BTN/MOG family. As to expression, expressed in brain, heart, kidney, liver, pancreas, ovary, leukocyte, small intestine, testis and thymus.

It is found in the membrane. Negative regulator of T-cell proliferation. The polypeptide is Butyrophilin-like protein 2 (Homo sapiens (Human)).